The primary structure comprises 204 residues: Cytochrome c oxidase subunit 3 (204 aa).

Transmembrane regions (helical) follow at residues 12-32, 56-76, 101-121, 133-153, and 171-191; these read YGNL…IQWW, GMML…WAYF, FQIP…VTWA, AIHS…LQMM, and FFVA…FLFM.

It belongs to the cytochrome c oxidase subunit 3 family. In terms of assembly, component of the cytochrome c oxidase (complex IV, CIV), a multisubunit enzyme composed of a catalytic core of 3 subunits and several supernumerary subunits. The complex exists as a monomer or a dimer and forms supercomplexes (SCs) in the inner mitochondrial membrane with ubiquinol-cytochrome c oxidoreductase (cytochrome b-c1 complex, complex III, CIII).

Its subcellular location is the mitochondrion inner membrane. The enzyme catalyses 4 Fe(II)-[cytochrome c] + O2 + 8 H(+)(in) = 4 Fe(III)-[cytochrome c] + 2 H2O + 4 H(+)(out). Component of the cytochrome c oxidase, the last enzyme in the mitochondrial electron transport chain which drives oxidative phosphorylation. The respiratory chain contains 3 multisubunit complexes succinate dehydrogenase (complex II, CII), ubiquinol-cytochrome c oxidoreductase (cytochrome b-c1 complex, complex III, CIII) and cytochrome c oxidase (complex IV, CIV), that cooperate to transfer electrons derived from NADH and succinate to molecular oxygen, creating an electrochemical gradient over the inner membrane that drives transmembrane transport and the ATP synthase. Cytochrome c oxidase is the component of the respiratory chain that catalyzes the reduction of oxygen to water. Electrons originating from reduced cytochrome c in the intermembrane space (IMS) are transferred via the dinuclear copper A center (CU(A)) of subunit 2 and heme A of subunit 1 to the active site in subunit 1, a binuclear center (BNC) formed by heme A3 and copper B (CU(B)). The BNC reduces molecular oxygen to 2 water molecules using 4 electrons from cytochrome c in the IMS and 4 protons from the mitochondrial matrix. This is Cytochrome c oxidase subunit 3 (COIII) from Enteroctopus dofleini (North Pacific giant octopus).